A 937-amino-acid polypeptide reads, in one-letter code: MDIERKWRDRWRDAGIFQADPDDREKIFLTVAYPYPSGAMHIGHGRTYTVPDVYARFKRMQGYNVLFPMAWHVTGAPVIGIARRIQRKDPWTLKIYREVHRVPEDELERFSDPEYIVEYFSREYRSVMEDMGYSIDWRREFKTTDPTYSRFIQWQIRKLRDLGLVRKGAHPVKYCPECENPVGDHDLLEGEGVAINQLTLLKFKLGDSYLVAATFRPETIYGATNLWLNPDEDYVRVETGGEEWIISRAAVDNLSHQKLDLKVSGDVNPGDLIGMCVENPVTGQEHPILPASFVDPEYATGVVFSVPAHAPADFIALEDLRTDHELLERYGLEDVVADIEPVNVIAVDGYGEFPAAEVIEKFGVRNQEDPRLEDATGELYKIEHARGVMSSHIPVYGGMKVSEAREVIADELKDQGLADEMYEFAERPVICRCGGRCVVRVMEDQWFMKYSDDAWKDLAHRCLDGMKIIPEEVRANFEYYIDWLNDWACSRRIGLGTRLPWDERWIIEPLTDSTIYMAYYTIAHRLREMDAGEMDDEFFDAIFLDDSGTFEDLREEFRYWYPLDWRLSAKDLIGNHLTFHIFHHSAIFPESGWPRGAVVFGMGLLEGNKMSSSKGNVILLRDAIEKHGADVVRLFLMSSAEPWQDFDWRESEVIGTRRRIEWFREFGERVSGILDGRPVLSEVTPAEPESFIGRWMMGQLNQRIREATRALESFQTRKAVQEALYLLKKDVDHYLKRVEGRVDDEVKSVLANVLHAWIRLMAPFIPYTAEEMWERYGGEGFVAEAPWPDFSDDAESRDVQVAEEMVQNTVRDIQEIMKILGSTPERVHIYTSPKWKWDVLRVAAEVGKLDMGSIMGRVSAEGIHDNMKEVAEFVRRIIRDLGKSEVTVIDEYSVLMDASDYIESEVGARVVIHSKPDYDPENKAVNAVPLKPAIYLE.

Residues 34-44 (PYPSGAMHIGH) carry the 'HIGH' region motif. The 'KMSKS' region motif lies at 609–613 (KMSSS).

The protein belongs to the class-I aminoacyl-tRNA synthetase family.

The protein resides in the cytoplasm. The catalysed reaction is tRNA(Leu) + L-leucine + ATP = L-leucyl-tRNA(Leu) + AMP + diphosphate. In Methanothermobacter thermautotrophicus (strain ATCC 29096 / DSM 1053 / JCM 10044 / NBRC 100330 / Delta H) (Methanobacterium thermoautotrophicum), this protein is Leucine--tRNA ligase.